The primary structure comprises 226 residues: GTP-binding nuclear protein Ran (226 aa).

A Small GTPase Ran-type domain is found at 3–184 (DPISFKVILV…LSILRTLLND (182 aa)). 14 to 21 (DGATGKTT) contacts GTP. Positions 33–41 (KQYISTIGV) are switch-I. GTP-binding positions include Gly70, 135 to 138 (NKCD), and 163 to 165 (SAK). The tract at residues 70–86 (GQEKFGGLRDGYYVDSD) is switch-II.

The protein belongs to the small GTPase superfamily. Ran family. In terms of assembly, found in a nuclear export complex with RanGTP, exportin and pre-miRNA.

It is found in the nucleus. Functionally, GTP-binding protein involved in nucleocytoplasmic transport. Required for the import of protein into the nucleus and also for RNA export. Involved in chromatin condensation and control of cell cycle. This is GTP-binding nuclear protein Ran from Giardia intestinalis (Giardia lamblia).